A 200-amino-acid polypeptide reads, in one-letter code: Isochorismatase family protein 2A (200 aa).

The protein belongs to the isochorismatase family.

This chain is Isochorismatase family protein 2A, found in Dictyostelium discoideum (Social amoeba).